Here is a 602-residue protein sequence, read N- to C-terminus: Zinc finger MYND domain-containing protein 11 (602 aa).

The SAMD1-like winged helix (WH) domain maps to 6-82; the sequence is KRRQADTKAI…CKGSKAGIEQ (77 aa). The segment at 100–148 adopts a PHD-type zinc-finger fold; it reads DWYCFECHLPGEVLICDLCFRVYHSKCLSDEFRLRDSSSPWQCPVCRSI. The Bromo domain occupies 149 to 255; sequence KKKNTNKQEM…KDTCHELDEL (107 aa). Residues C258, C261, C277, and H281 each coordinate Zn(2+). The PWWP domain occupies 280–331; the sequence is NHELVWAKMKGFGFWPAKVMQKEDNQVDVRFFGHHHQRAWIPSENIQDITVN. K366 is covalently cross-linked (Glycyl lysine isopeptide (Lys-Gly) (interchain with G-Cter in SUMO2)). The interval 366-459 is disordered; sequence KNEDRGEEEA…MLHRSTQTTN (94 aa). The Nuclear localization signal signature appears at 394-400; that stretch reads RAKKGRR. Residues K407 and K408 each participate in a glycyl lysine isopeptide (Lys-Gly) (interchain with G-Cter in SUMO2) cross-link. S421 is subject to Phosphoserine. Residues 435-459 are compositionally biased toward polar residues; the sequence is SVSTQTKKLSASSPRMLHRSTQTTN. The interval 452–572 is interaction with human adenovirus E1A; that stretch reads HRSTQTTNDG…CYNCEEEAMY (121 aa). The Zn(2+) site is built by C563, C566, C574, C575, C581, C585, H594, and C598. The segment at 563–598 adopts an MYND-type zinc-finger fold; it reads CYNCEEEAMYHCCWNTSYCSIKCQQEHWHAEHKRTC.

As to quaternary structure, homooligomer; forms homooligomers via its C-terminus. Interacts with histone H3.3 trimethylated at 'Lys-36' (H3.3K36me3). Interacts (via MYND-type zinc finger) with NCOR1. Interacts (via MYND-type zinc finger) with MGA protein (via PXLXP motif). Interacts (via MYND-type zinc finger) with EZH2. Interacts with EMSY and E2F6. Interacts with PIAS1 and UBE2I. In terms of assembly, (Microbial infection) Interacts (via MYND-type zinc finger) with human adenovirus early E1A protein (via PXLXP motif); this interaction inhibits E1A mediated transactivation. (Microbial infection) Interacts (via MYND-type zinc finger) with Epstein-Barr virus EBNA2 protein (via PXLXP motif). Interacts with Epstein-Barr virus-derived protein LMP1; leading to negatively regulate NF-kappa-B activation by Epstein-Barr virus-derived protein LMP1. In terms of processing, sumoylated following its interaction with PIAS1 and UBE2I. Ubiquitinated, leading to proteasomal degradation. In terms of tissue distribution, ubiquitous.

It localises to the nucleus. The protein localises to the chromosome. Functionally, chromatin reader that specifically recognizes and binds histone H3.3 trimethylated at 'Lys-36' (H3.3K36me3) and regulates RNA polymerase II elongation. Does not bind other histone H3 subtypes (H3.1 or H3.2). Colocalizes with highly expressed genes and functions as a transcription corepressor by modulating RNA polymerase II at the elongation stage. Binds non-specifically to dsDNA. Acts as a tumor-suppressor by repressing a transcriptional program essential for tumor cell growth. In terms of biological role, (Microbial infection) Inhibits Epstein-Barr virus EBNA2-mediated transcriptional activation and host cell proliferation, through direct interaction. In Homo sapiens (Human), this protein is Zinc finger MYND domain-containing protein 11.